The sequence spans 245 residues: tRNA pseudouridine synthase A (245 aa).

D52 acts as the Nucleophile in catalysis. Substrate is bound at residue Y111.

Belongs to the tRNA pseudouridine synthase TruA family. In terms of assembly, homodimer.

It carries out the reaction uridine(38/39/40) in tRNA = pseudouridine(38/39/40) in tRNA. Formation of pseudouridine at positions 38, 39 and 40 in the anticodon stem and loop of transfer RNAs. The chain is tRNA pseudouridine synthase A from Bradyrhizobium sp. (strain BTAi1 / ATCC BAA-1182).